The primary structure comprises 315 residues: Methionine import ATP-binding protein MetN (315 aa).

One can recognise an ABC transporter domain in the interval 2-219 (IEIEKVCVDF…PQHAFTQQLV (218 aa)). Residue 16-23 (GTSGAGKS) coordinates ATP.

Belongs to the ABC transporter superfamily. Methionine importer (TC 3.A.1.24) family. In terms of assembly, the complex is composed of two ATP-binding proteins (MetN), two transmembrane proteins (MetI) and a solute-binding protein (MetQ).

It is found in the cell inner membrane. It carries out the reaction L-methionine(out) + ATP + H2O = L-methionine(in) + ADP + phosphate + H(+). It catalyses the reaction D-methionine(out) + ATP + H2O = D-methionine(in) + ADP + phosphate + H(+). Part of the ABC transporter complex MetNIQ involved in methionine import. Responsible for energy coupling to the transport system. This chain is Methionine import ATP-binding protein MetN, found in Salmonella enteritidis.